Here is a 338-residue protein sequence, read N- to C-terminus: Heat-inducible transcription repressor HrcA (338 aa).

It belongs to the HrcA family.

Functionally, negative regulator of class I heat shock genes (grpE-dnaK-dnaJ and groELS operons). Prevents heat-shock induction of these operons. In Streptomyces avermitilis (strain ATCC 31267 / DSM 46492 / JCM 5070 / NBRC 14893 / NCIMB 12804 / NRRL 8165 / MA-4680), this protein is Heat-inducible transcription repressor HrcA.